A 423-amino-acid polypeptide reads, in one-letter code: MNLLKEVLKNQVYPAMGCTEPVSVALCAAYAAKELGKPVQKAVFYLDAGTFKNGLAVRIPNTSGERGNLLAGTAGLLIAKPQLKMEILKAATPSILKRAKQLIDDKKAFIKVAPCKKHFYIKVEVENGKDKASCVISDSHTTVSKLTKNGKVIFENKPSKKKEDNYKQLLGKATLKDLIALADNADNTDLKYIKKGVEMNLNACKEGKKLKKVGFFLESTVEKSILQKNLVTETKIMAARVADARMDGIAVPVMSSGESGNQGVVAILVPYNVGKKSKVKEEKILKSIAFSHLLNGYVKVYTGSLSPLCGCAIAAGVGAAGAIVYQQNGDLKKITLAINNIISDIGGMLCDGAKSGCALKVVSSVDSAIRAAYMGLNNYGITELEGFIGKTAEETIQNLGNISITGMCDVDAVIVDIMKKKVK.

Belongs to the UPF0597 family.

This is UPF0597 protein Emin_0811 from Elusimicrobium minutum (strain Pei191).